We begin with the raw amino-acid sequence, 157 residues long: Protein-export protein SecB (157 aa).

It belongs to the SecB family. In terms of assembly, homotetramer, a dimer of dimers. One homotetramer interacts with 1 SecA dimer.

The protein localises to the cytoplasm. In terms of biological role, one of the proteins required for the normal export of preproteins out of the cell cytoplasm. It is a molecular chaperone that binds to a subset of precursor proteins, maintaining them in a translocation-competent state. It also specifically binds to its receptor SecA. This is Protein-export protein SecB from Methylobacillus flagellatus (strain ATCC 51484 / DSM 6875 / VKM B-1610 / KT).